We begin with the raw amino-acid sequence, 103 residues long: Small ribosomal subunit protein uS10 (103 aa).

It belongs to the universal ribosomal protein uS10 family. As to quaternary structure, part of the 30S ribosomal subunit.

Its function is as follows. Involved in the binding of tRNA to the ribosomes. The polypeptide is Small ribosomal subunit protein uS10 (Acetivibrio thermocellus (strain ATCC 27405 / DSM 1237 / JCM 9322 / NBRC 103400 / NCIMB 10682 / NRRL B-4536 / VPI 7372) (Clostridium thermocellum)).